The following is a 312-amino-acid chain: NADH-ubiquinone oxidoreductase chain 1 (312 aa).

8 helical membrane passes run 3–23 (FILS…SVAF), 77–97 (ISPI…PFFV), 104–124 (LGGL…MVAG), 150–170 (LALI…VYFF), 174–194 (IYVW…TISL), 226–246 (LIFM…CVIF), 250–270 (DVFN…FIWA), and 289–309 (CFLS…ILLF).

Belongs to the complex I subunit 1 family.

Its subcellular location is the mitochondrion inner membrane. It carries out the reaction a ubiquinone + NADH + 5 H(+)(in) = a ubiquinol + NAD(+) + 4 H(+)(out). Functionally, core subunit of the mitochondrial membrane respiratory chain NADH dehydrogenase (Complex I) that is believed to belong to the minimal assembly required for catalysis. Complex I functions in the transfer of electrons from NADH to the respiratory chain. The immediate electron acceptor for the enzyme is believed to be ubiquinone. The sequence is that of NADH-ubiquinone oxidoreductase chain 1 (mt:ND1) from Drosophila subobscura (Fruit fly).